Here is a 156-residue protein sequence, read N- to C-terminus: Large ribosomal subunit protein uL22 (156 aa).

This sequence belongs to the universal ribosomal protein uL22 family. In terms of assembly, part of the 50S ribosomal subunit.

Functionally, this protein binds specifically to 23S rRNA. It makes multiple contacts with different domains of the 23S rRNA in the assembled 50S subunit and ribosome. Its function is as follows. The globular domain of the protein is located near the polypeptide exit tunnel on the outside of the subunit, while an extended beta-hairpin is found that lines the wall of the exit tunnel in the center of the 70S ribosome. The chain is Large ribosomal subunit protein uL22 from Sulfurisphaera tokodaii (strain DSM 16993 / JCM 10545 / NBRC 100140 / 7) (Sulfolobus tokodaii).